We begin with the raw amino-acid sequence, 107 residues long: Nucleoid-associated protein MCA1327 (107 aa).

The protein belongs to the YbaB/EbfC family. As to quaternary structure, homodimer.

It is found in the cytoplasm. The protein resides in the nucleoid. Binds to DNA and alters its conformation. May be involved in regulation of gene expression, nucleoid organization and DNA protection. The sequence is that of Nucleoid-associated protein MCA1327 from Methylococcus capsulatus (strain ATCC 33009 / NCIMB 11132 / Bath).